A 217-amino-acid polypeptide reads, in one-letter code: NADPH-dependent 3-demethoxyubiquinone 3-hydroxylase, mitochondrial (217 aa).

The transit peptide at Met1–Phe34 directs the protein to the mitochondrion. A run of 2 repeats spans residues Ala48–Leu129 and Gly130–Leu217. The tract at residues Ala48 to Leu217 is 2 X approximate tandem repeats. Arg51 provides a ligand contact to NADH. Residues Glu60, Glu90, His93, Glu142, Glu178, and His181 each contribute to the Fe cation site. Residues Lys208, Tyr212, and Arg216 each contribute to the NADH site.

Belongs to the COQ7 family. As to quaternary structure, component of a multi-subunit COQ enzyme complex. Interacts with COQ8B and COQ6. Interacts with COQ9. Fe cation is required as a cofactor.

It is found in the mitochondrion inner membrane. It carries out the reaction a 5-methoxy-2-methyl-3-(all-trans-polyprenyl)benzoquinone + NADH + O2 = a 3-demethylubiquinone + NAD(+) + H2O. It functions in the pathway cofactor biosynthesis; ubiquinone biosynthesis. Catalyzes the hydroxylation of the 5-methoxy-2-methyl-3-(all-trans-polyprenyl)benzoquinone at the C6 position and participates in the biosynthesis of ubiquinone. Catalyzes the reaction through a substrate-mediated reduction pathway, whereby NADH shuttles electrons to 5-methoxy-2-methyl-3-(all-trans-decaprenyl)benzoquinone, which then transfers the electrons to the two Fe(3+) centers. The binding of 5-methoxy-2-methyl-3-(all-trans-polyprenyl)benzoquinone (DMQn) mediates reduction of the diiron center by nicotinamide adenine dinucleotide (NADH) and initiates oxygen activation for subsequent DMQ hydroxylation. The physiological substrates are 5-methoxy-2-methyl-3-(all-trans-nonaprenyl)benzoquinone (DMQ(9)) and 5-methoxy-2-methyl-3-(all-trans-decaprenyl)benzoquinone (DMQ(10)), however in vitro the enzyme does not have any specificity concerning the length of the polyprenyl tail, and accepts tails of various lengths with similar efficiency. Also has a structural role in the COQ enzyme complex, stabilizing other COQ polypeptides. Involved in lifespan determination in a ubiquinone-independent manner. Plays a role in modulating mitochondrial stress responses, acting in the nucleus, perhaps via regulating gene expression, independent of its characterized mitochondrial function in ubiquinone biosynthesis. In Bos taurus (Bovine), this protein is NADPH-dependent 3-demethoxyubiquinone 3-hydroxylase, mitochondrial.